Consider the following 60-residue polypeptide: MAVPKRKTTPSKRGMRRSADALKQPAYVENPDSGELHRPHHVDLKSGMYRGKQILKPKGE.

Over residues Met-1 to Arg-16 the composition is skewed to basic residues. Positions Met-1–Glu-60 are disordered. The span at Gly-34–Leu-44 shows a compositional bias: basic and acidic residues.

It belongs to the bacterial ribosomal protein bL32 family.

In Parvibaculum lavamentivorans (strain DS-1 / DSM 13023 / NCIMB 13966), this protein is Large ribosomal subunit protein bL32.